An 852-amino-acid polypeptide reads, in one-letter code: MAGALAGLAAGLQVPRVAPSPDSDSDTDSEDPSLRRSAGGLLRSQVIHSGHFMVSSPHSDSLPRRRDQEGSVGPSDFGPRSIDPTLTRLFECLSLAYSGKLVSPKWKNFKGLKLLCRDKIRLNNAIWRAWYIQYVKRRKSPVCGFVTPLQGPEADAHRKPEAVVLEGNYWKRRIEVVMREYHKWRIYYKKRLRKPSREDDLLAPKQAEGRWPPPEQWCKQLFSSVVPVLLGDPEEEPGGRQLLDLNCFLSDISDTLFTMTQSGPSPLQLPPEDAYVGNADMIQPDLTPLQPSLDDFMDISDFFTNSRLPQPPMPSNFPEPPSFSPVVDSLFSSGTLGPEVPPASSAMTHLSGHSRLQARNSCPGPLDSSAFLSSDFLLPEDPKPRLPPPPVPPPLLHYPPPAKVPGLEPCPPPPFPPMAPPTALLQEEPLFSPRFPFPTVPPAPGVSPLPAPAAFPPTPQSVPSPAPTPFPIELLPLGYSEPAFGPCFSMPRGKPPAPSPRGQKASPPTLAPATASPPTTAGSNNPCLTQLLTAAKPEQALEPPLVSSTLLRSPGSPQETVPEFPCTFLPPTPAPTPPRPPPGPATLAPSRPLLVPKAERLSPPAPSGSERRLSGDLSSMPGPGTLSVRVSPPQPILSRGRPDSNKTENRRITHISAEQKRRFNIKLGFDTLHGLVSTLSAQPSLKVSKATTLQKTAEYILMLQQERAGLQEEAQQLRDEIEELNAAINLCQQQLPATGVPITHQRFDQMRDMFDDYVRTRTLHNWKFWVFSILIRPLFESFNGMVSTASVHTLRQTSLAWLDQYCSLPALRPTVLNSLRQLGTSTSILTDPGRIPEQATRAVTEGTLGKPL.

Residues 1–12 (MAGALAGLAAGL) show a composition bias toward low complexity. Disordered regions lie at residues 1–36 (MAGA…SLRR) and 54–80 (VSSP…FGPR). Phosphoserine is present on residues serine 20, serine 23, and serine 25. Threonine 27 carries the phosphothreonine modification. Phosphoserine is present on serine 29. At serine 196 the chain carries Phosphoserine. Disordered stretches follow at residues 328–365 (DSLF…CPGP), 486–527 (PCFS…NNPC), and 548–648 (STLL…NKTE). Low complexity predominate over residues 505–521 (ASPPTLAPATASPPTTA). Residues 548–559 (STLLRSPGSPQE) are compositionally biased toward polar residues. At serine 556 the chain carries Phosphoserine; by AMPK. A compositionally biased stretch (pro residues) spans 568 to 584 (FLPPTPAPTPPRPPPGP). Residues serine 602, serine 614, and serine 631 each carry the phosphoserine modification. A bHLH domain is found at 649 to 703 (NRRITHISAEQKRRFNIKLGFDTLHGLVSTLSAQPSLKVSKATTLQKTAEYILML). A leucine-zipper region spans residues 703–724 (LQQERAGLQEEAQQLRDEIEEL).

As to quaternary structure, binds DNA as a heterodimer with MLX/TCFL4. Post-translationally, phosphorylation at Ser-556 by AMPK inactivates the DNA-binding activity. Expressed in liver, heart, kidney, cerebellum and intestinal tissues.

Its subcellular location is the nucleus. Binds DNA as a heterodimer with MLX/TCFL4 and activates transcription. Binds to the canonical E box sequence 5'-CACGTG-3'. Plays a role in transcriptional activation of glycolytic target genes. Involved in glucose-responsive gene regulation. Regulates transcription in response to changes in cellular carbohydrate abundance such as occurs during fasting to feeding metabolic transition. Refeeding stimulates MLXIPL/ChREBP transcription factor, leading to increased BCKDK to PPM1K expression ratio, phosphorylation and activation of ACLY that ultimately results in the generation of malonyl-CoA and oxaloacetate immediate substrates of de novo lipogenesis and gluconeogenesis, respectively. The polypeptide is Carbohydrate-responsive element-binding protein (MLXIPL) (Homo sapiens (Human)).